Consider the following 3391-residue polypeptide: Genome polyprotein (3391 aa).

The interval 1–15 (MNNQRKKTARPSFNM) is interaction with host EXOC1. The Cytoplasmic portion of the chain corresponds to 1-101 (MNNQRKKTAR…LNIMNRRKRS (101 aa)). The segment at 37–72 (LLSGQGPMKLVMAFIAFLRFLAIPPTAGILARWGSF) is hydrophobic; homodimerization of capsid protein C. The propeptide at 101–114 (SVTMLLMLLPTALA) is ER anchor for the capsid protein C, removed in mature form by serine protease NS3. The chain crosses the membrane as a helical span at residues 102 to 119 (VTMLLMLLPTALAFHLTT). The Extracellular segment spans residues 120–242 (RGGEPHMIVS…QIQRVETWAL (123 aa)). Residue Asn-183 is glycosylated (N-linked (GlcNAc...) asparagine; by host). Residues 243-260 (RHPGFTVIALFLAHAIGT) traverse the membrane as a helical segment. Position 261 (Ser-261) is a topological domain, cytoplasmic. The helical transmembrane segment at 262–280 (ITQKGIIFILLMLVTPSMA) threads the bilayer. Residues 281–725 (MRCVGIGSRD…HQVFGTAYGV (445 aa)) lie on the Extracellular side of the membrane. Cystine bridges form between Cys-283–Cys-310, Cys-340–Cys-401, Cys-354–Cys-385, and Cys-372–Cys-396. Asn-347 carries an N-linked (GlcNAc...) asparagine; by host glycan. Residues 378–391 (DRGWGNGCGLFGKG) form a fusion peptide region. Asn-433 carries an N-linked (GlcNAc...) asparagine; by host glycan. 2 disulfides stabilise this stretch: Cys-465–Cys-565 and Cys-582–Cys-613. The helical transmembrane segment at 726–746 (LFSGVSWTMKIGIGILLTWLG) threads the bilayer. The Cytoplasmic segment spans residues 747 to 752 (LNSRST). Residues 753-773 (SLSMTCIAVGMVTLYLGVMVQ) traverse the membrane as a helical segment. At 774–1198 (ADSGCVINWK…NASDRMGMGT (425 aa)) the chain is on the extracellular side. 6 cysteine pairs are disulfide-bonded: Cys-778-Cys-789, Cys-829-Cys-917, Cys-953-Cys-997, Cys-1054-Cys-1103, Cys-1065-Cys-1087, and Cys-1086-Cys-1090. Asn-904 and Asn-981 each carry an N-linked (GlcNAc...) asparagine; by host glycan. Asn-1189 carries an N-linked (GlcNAc...) asparagine; by host glycan. The helical transmembrane segment at 1199–1219 (TYLALMATFKMRPMFAVGLLF) threads the bilayer. Residues 1220-1225 (RRLTSR) lie on the Cytoplasmic side of the membrane. Residues 1226 to 1244 (EVLLLTIGLSLVASVELPN) traverse the membrane as a helical segment. Residues 1245-1268 (SLEELGDGLAMGIMILKLLTDFQS) are Lumenal-facing. The chain crosses the membrane as a helical span at residues 1269–1289 (HQLWATLLSLTFVKTTFSLHY). A topological domain (cytoplasmic) is located at residue Ala-1290. Residues 1291–1309 (WKTMAMVLSIVSLFPLCLS) form a helical membrane-spanning segment. Topologically, residues 1310–1314 (TTSQK) are lumenal. Residues 1315-1335 (TTWLPVLLGSLGCKPLTMFLI) form a helical membrane-spanning segment. Residues 1336–1345 (AENKIWGRKS) lie on the Cytoplasmic side of the membrane. The helical transmembrane segment at 1346-1366 (WPLNEGIMAVGIVSILLSSLL) threads the bilayer. Residues 1367–1369 (KND) are Lumenal-facing. A helical transmembrane segment spans residues 1370–1390 (VPLAGPLIAGGMLIACYVISG). The Cytoplasmic portion of the chain corresponds to 1391–1446 (SSADLSLEKAAEVSWEEEAEHSGASHNILVEVQDDGTMKIKDEERDDTLTILLKAT). The tract at residues 1397-1436 (LEKAAEVSWEEEAEHSGASHNILVEVQDDGTMKIKDEERD) is interacts with and activates NS3 protease. The helical intramembrane region spans 1447–1467 (LLAVSGVYPLSIPATLFVWYF). The Cytoplasmic segment spans residues 1468–2147 (WQKKKQRSGV…MEELPDTIET (680 aa)). One can recognise a Peptidase S7 domain in the interval 1475–1652 (SGVLWDTPSP…KASQEGPLPE (178 aa)). Residues His-1525, Asp-1549, and Ser-1609 each act as charge relay system; for serine protease NS3 activity in the active site. One can recognise a Helicase ATP-binding domain in the interval 1655-1811 (DEVFRKRNLT…QSNAVIQDEE (157 aa)). The interval 1659 to 1662 (RKRN) is important for RNA-binding. Position 1668 to 1675 (1668 to 1675 (LHPGSGKT)) interacts with ATP. The DEAH box motif lies at 1759 to 1762 (DEAH). In terms of domain architecture, Helicase C-terminal spans 1821–1988 (SGYEWITDFP…IIPALFEPER (168 aa)). An N6-acetyllysine; by host modification is found at Lys-1863. A helical transmembrane segment spans residues 2148 to 2168 (LMLLALIAVLTGGVTLFFLSG). The Lumenal segment spans residues 2169–2170 (KG). Residues 2171 to 2191 (LGKTSIGLLCVMASSVLLWMA) constitute an intramembrane region (helical). Ser-2192 is a topological domain (lumenal). The chain crosses the membrane as a helical span at residues 2193–2213 (VEPHWIAASIILEFFLMVLLI). Over 2214–2228 (PEPDRQRTPQDNQLA) the chain is Cytoplasmic. The chain crosses the membrane as a helical span at residues 2229-2249 (YVVIGLLFMILTVAANEMGLL). At 2250–2275 (ETTKKDLGIGHVAAENHHHATMLDVD) the chain is on the lumenal side. The segment at residues 2276 to 2296 (LRPASAWTLYAVATTVITPMM) is an intramembrane region (helical). The Lumenal portion of the chain corresponds to 2297 to 2348 (RHTIENTTANISLTAIANQAAILMGLDKGWPISKMDIGVPLLALGCYSQVNP). 2 N-linked (GlcNAc...) asparagine; by host glycosylation sites follow: Asn-2302 and Asn-2306. Residues 2349 to 2369 (LTLTAAVLMLVAHYAIIGPGL) traverse the membrane as a helical segment. The Cytoplasmic segment spans residues 2370 to 2414 (QAKATREAQKRTAAGIMKNPTVDGIVAIDLDPVVYDAKFEKQLGQ). Residues 2415–2435 (IMLLILCTSQILLMRTTWALC) form a helical membrane-spanning segment. The Lumenal segment spans residues 2436-2460 (ESITLATGPLTTLWEGSPGKFWNTT). A glycan (N-linked (GlcNAc...) asparagine; by host) is linked at Asn-2458. The chain crosses the membrane as a helical span at residues 2461-2481 (IAVSMANIFRGSYLAGAGLAF). Residues 2482–3391 (SLMKSLGGGR…NESDPEGALW (910 aa)) lie on the Cytoplasmic side of the membrane. The mRNA cap 0-1 NS5-type MT domain occupies 2494-2755 (TGAKGKHWER…DVDLGAGTRH (262 aa)). Ser-2548 lines the S-adenosyl-L-methionine pocket. At Ser-2548 the chain carries Phosphoserine. Lys-2553 (for 2'-O-MTase activity) is an active-site residue. The SUMO-interacting motif signature appears at 2569-2572 (VIDL). S-adenosyl-L-methionine-binding residues include Gly-2578, Trp-2579, Thr-2596, Lys-2597, Asp-2623, and Val-2624. The For 2'-O-MTase activity role is filled by Asp-2638. Residue Ile-2639 coordinates S-adenosyl-L-methionine. Active-site for 2'-O-MTase activity residues include Lys-2672 and Glu-2708. Tyr-2710 is an S-adenosyl-L-methionine binding site. Zn(2+)-binding residues include Glu-2929, His-2933, Cys-2938, and Cys-2941. One can recognise a RdRp catalytic domain in the interval 3019 to 3168 (GNMYADDTAG…KPIDDRFATA (150 aa)). 3 residues coordinate Zn(2+): His-3203, Cys-3219, and Cys-3338.

The protein in the N-terminal section; belongs to the class I-like SAM-binding methyltransferase superfamily. mRNA cap 0-1 NS5-type methyltransferase family. Homodimer. Interacts (via N-terminus) with host EXOC1 (via C-terminus); this interaction results in EXOC1 degradation through the proteasome degradation pathway. In terms of assembly, forms heterodimers with envelope protein E in the endoplasmic reticulum and Golgi. As to quaternary structure, homodimer; in the endoplasmic reticulum and Golgi. Interacts with protein prM. Interacts with non-structural protein 1. Homodimer; Homohexamer when secreted. Interacts with envelope protein E. In terms of assembly, interacts (via N-terminus) with serine protease NS3. As to quaternary structure, forms a heterodimer with serine protease NS3. May form homooligomers. Forms a heterodimer with NS2B. Interacts with NS4B. Interacts with unphosphorylated RNA-directed RNA polymerase NS5; this interaction stimulates RNA-directed RNA polymerase NS5 guanylyltransferase activity. Interacts with host SHFL. In terms of assembly, interacts with host MAVS; this interaction inhibits the synthesis of IFN-beta. Interacts with host SHFL. Interacts with host AUP1; the interaction occurs in the presence of Dengue virus NS4B and induces lipophagy which facilitates production of virus progeny particles. As to quaternary structure, interacts with serine protease NS3. Homodimer. Interacts with host STAT2; this interaction inhibits the phosphorylation of the latter, and, when all viral proteins are present (polyprotein), targets STAT2 for degradation. Interacts with serine protease NS3. In terms of processing, specific enzymatic cleavages in vivo yield mature proteins. Cleavages in the lumen of endoplasmic reticulum are performed by host signal peptidase, whereas cleavages in the cytoplasmic side are performed by serine protease NS3. Signal cleavage at the 2K-4B site requires a prior NS3 protease-mediated cleavage at the 4A-2K site. Cleaved in post-Golgi vesicles by a host furin, releasing the mature small envelope protein M, and peptide pr. This cleavage is incomplete as up to 30% of viral particles still carry uncleaved prM. Post-translationally, N-glycosylated. In terms of processing, N-glycosylated. The excreted form is glycosylated and this is required for efficient secretion of the protein from infected cells. Acetylated by host KAT5. Acetylation modulates NS3 RNA-binding and unwinding activities and plays an important positive role for viral replication. Post-translationally, sumoylation of RNA-directed RNA polymerase NS5 increases NS5 protein stability allowing proper viral RNA replication. In terms of processing, phosphorylated on serines residues. This phosphorylation may trigger NS5 nuclear localization.

The protein localises to the virion. It is found in the host nucleus. Its subcellular location is the host cytoplasm. It localises to the host perinuclear region. The protein resides in the secreted. The protein localises to the virion membrane. It is found in the host endoplasmic reticulum membrane. Its subcellular location is the host mitochondrion. It carries out the reaction Selective hydrolysis of -Xaa-Xaa-|-Yaa- bonds in which each of the Xaa can be either Arg or Lys and Yaa can be either Ser or Ala.. It catalyses the reaction RNA(n) + a ribonucleoside 5'-triphosphate = RNA(n+1) + diphosphate. The catalysed reaction is a ribonucleoside 5'-triphosphate + H2O = a ribonucleoside 5'-diphosphate + phosphate + H(+). The enzyme catalyses ATP + H2O = ADP + phosphate + H(+). It carries out the reaction a 5'-end (5'-triphosphoguanosine)-ribonucleoside in mRNA + S-adenosyl-L-methionine = a 5'-end (N(7)-methyl 5'-triphosphoguanosine)-ribonucleoside in mRNA + S-adenosyl-L-homocysteine. It catalyses the reaction a 5'-end (N(7)-methyl 5'-triphosphoguanosine)-ribonucleoside in mRNA + S-adenosyl-L-methionine = a 5'-end (N(7)-methyl 5'-triphosphoguanosine)-(2'-O-methyl-ribonucleoside) in mRNA + S-adenosyl-L-homocysteine + H(+). Plays a role in virus budding by binding to the cell membrane and gathering the viral RNA into a nucleocapsid that forms the core of a mature virus particle. During virus entry, may induce genome penetration into the host cytoplasm after hemifusion induced by the surface proteins. Can migrate to the cell nucleus where it modulates host functions. Overcomes the anti-viral effects of host EXOC1 by sequestering and degrading the latter through the proteasome degradation pathway. Its function is as follows. Inhibits RNA silencing by interfering with host Dicer. In terms of biological role, prevents premature fusion activity of envelope proteins in trans-Golgi by binding to envelope protein E at pH6.0. After virion release in extracellular space, gets dissociated from E dimers. Functionally, acts as a chaperone for envelope protein E during intracellular virion assembly by masking and inactivating envelope protein E fusion peptide. prM is the only viral peptide matured by host furin in the trans-Golgi network probably to avoid catastrophic activation of the viral fusion activity in acidic Golgi compartment prior to virion release. prM-E cleavage is inefficient, and many virions are only partially matured. These uncleaved prM would play a role in immune evasion. May play a role in virus budding. Exerts cytotoxic effects by activating a mitochondrial apoptotic pathway through M ectodomain. May display a viroporin activity. Its function is as follows. Binds to host cell surface receptor and mediates fusion between viral and cellular membranes. Envelope protein is synthesized in the endoplasmic reticulum in the form of heterodimer with protein prM. They play a role in virion budding in the ER, and the newly formed immature particle is covered with 60 spikes composed of heterodimer between precursor prM and envelope protein E. The virion is transported to the Golgi apparatus where the low pH causes dissociation of PrM-E heterodimers and formation of E homodimers. prM-E cleavage is inefficient, and many virions are only partially matured. These uncleaved prM would play a role in immune evasion. In terms of biological role, involved in immune evasion, pathogenesis and viral replication. Once cleaved off the polyprotein, is targeted to three destinations: the viral replication cycle, the plasma membrane and the extracellular compartment. Essential for viral replication. Required for formation of the replication complex and recruitment of other non-structural proteins to the ER-derived membrane structures. Excreted as a hexameric lipoparticle that plays a role against host immune response. Antagonizing the complement function. Binds to the host macrophages and dendritic cells. Inhibits signal transduction originating from Toll-like receptor 3 (TLR3). Functionally, disrupts the host endothelial glycocalyx layer of host pulmonary microvascular endothelial cells, inducing degradation of sialic acid and shedding of heparan sulfate proteoglycans. NS1 induces expression of sialidases, heparanase, and activates cathepsin L, which activates heparanase via enzymatic cleavage. These effects are probably linked to the endothelial hyperpermeability observed in severe dengue disease. Component of the viral RNA replication complex that functions in virion assembly and antagonizes the host immune response. Its function is as follows. Required cofactor for the serine protease function of NS3. May have membrane-destabilizing activity and form viroporins. In terms of biological role, displays three enzymatic activities: serine protease, NTPase and RNA c. NS3 serine protease, in association with NS2B, performs its autocleavage and cleaves the polyprotein at dibasic sites in the cytoplasm: C-prM, NS2A-NS2B, NS2B-NS3, NS3-NS4A, NS4A-2K and NS4B-NS5. NS3 RNA helicase binds RNA and unwinds dsRNA in the 3' to 5' direction. Functionally, regulates the ATPase activity of the NS3 helicase activity. NS4A allows NS3 helicase to conserve energy during unwinding. Plays a role in the inhibition of the host innate immune response. Interacts with host MAVS and thereby prevents the interaction between RIGI and MAVS. In turn, IFN-beta production is impaired. Interacts with host AUP1 which mediates induction of lipophagy in host cells and facilitates production of virus progeny particles. Functions as a signal peptide for NS4B and is required for the interferon antagonism activity of the latter. Its function is as follows. Induces the formation of ER-derived membrane vesicles where the viral replication takes place. Inhibits interferon (IFN)-induced host STAT1 phosphorylation and nuclear translocation, thereby preventing the establishment of cellular antiviral state by blocking the IFN-alpha/beta pathway. In terms of biological role, replicates the viral (+) and (-) RNA genome, and performs the capping of genomes in the cytoplasm. NS5 methylates viral RNA cap at guanine N-7 and ribose 2'-O positions. Besides its role in RNA genome replication, also prevents the establishment of cellular antiviral state by blocking the interferon-alpha/beta (IFN-alpha/beta) signaling pathway. Inhibits host TYK2 and STAT2 phosphorylation, thereby preventing activation of JAK-STAT signaling pathway. This chain is Genome polyprotein, found in Aedes aegypti (Yellowfever mosquito).